We begin with the raw amino-acid sequence, 447 residues long: Argininosuccinate lyase (447 aa).

It belongs to the lyase 1 family. Argininosuccinate lyase subfamily.

It localises to the cytoplasm. The enzyme catalyses 2-(N(omega)-L-arginino)succinate = fumarate + L-arginine. Its pathway is amino-acid biosynthesis; L-arginine biosynthesis; L-arginine from L-ornithine and carbamoyl phosphate: step 3/3. The sequence is that of Argininosuccinate lyase from Bacteroides fragilis (strain YCH46).